The following is a 506-amino-acid chain: Plant intracellular Ras-group-related LRR protein 1 (506 aa).

A disordered region spans residues 24–48 (TAKSSSSSDVEPPPSKSDPSSSSNH). Positions 143-193 (KSILKLNELHESYEKLLKEAEERLVRIYESAEKNAAAVAEEEAAEVEVNEE) form a coiled coil. 10 LRR repeats span residues 203–225 (ENPL…AFGK), 226–249 (IQGL…IAGL), 251–272 (NLLE…IGLL), 273–295 (SKLK…ICHC), 297–319 (SLVV…GFEL), 320–342 (VKLE…IGEM), 344–364 (SLRY…SFGL), 365–389 (LTNL…SFGD), 390–412 (LISL…AFGT), and 414–436 (VNLT…VVKQ). The short motif at 437–449 (GVDAVKMYMGKRW) is the GVYW element.

It belongs to the SHOC2 family. In terms of tissue distribution, widely expressed.

In terms of biological role, leucine-rich repeat protein that likely mediates protein interactions, possibly in the context of signal transduction. PIRL1 acts redundantly with PIRL9 in the differentiation of microspores into pollen. The chain is Plant intracellular Ras-group-related LRR protein 1 (PIRL1) from Arabidopsis thaliana (Mouse-ear cress).